Consider the following 125-residue polypeptide: Large ribosomal subunit protein bL12 (125 aa).

This sequence belongs to the bacterial ribosomal protein bL12 family. Homodimer. Part of the ribosomal stalk of the 50S ribosomal subunit. Forms a multimeric L10(L12)X complex, where L10 forms an elongated spine to which 2 to 4 L12 dimers bind in a sequential fashion. Binds GTP-bound translation factors.

In terms of biological role, forms part of the ribosomal stalk which helps the ribosome interact with GTP-bound translation factors. Is thus essential for accurate translation. In Campylobacter concisus (strain 13826), this protein is Large ribosomal subunit protein bL12.